The sequence spans 469 residues: Carboxypeptidase Q (469 aa).

The signal sequence occupies residues Met1–Gly19. Residues Ala20–Lys42 constitute a propeptide that is removed on maturation. Asn59 and Asn159 each carry an N-linked (GlcNAc...) asparagine glycan. The Zn(2+) site is built by His288 and Asp300. Catalysis depends on Glu334, which acts as the Nucleophile. Glu335 contacts Zn(2+). Asn351 carries N-linked (GlcNAc...) asparagine glycosylation. Residue Asp362 coordinates Zn(2+). Asn394 carries an N-linked (GlcNAc...) asparagine glycan. His432 is a Zn(2+) binding site.

The protein belongs to the peptidase M28 family. In terms of assembly, homodimer. The monomeric form is inactive while the homodimer is active.

It localises to the endoplasmic reticulum. The protein resides in the golgi apparatus. The protein localises to the lysosome. Its subcellular location is the secreted. Its function is as follows. Carboxypeptidase that may play an important role in the hydrolysis of circulating peptides. Catalyzes more efficiently the hydrolysis of dipeptides with unsubstituted terminals into amino acids. The polypeptide is Carboxypeptidase Q (cpq) (Xenopus laevis (African clawed frog)).